A 366-amino-acid chain; its full sequence is Ribosomal RNA large subunit methyltransferase M (366 aa).

S-adenosyl-L-methionine is bound by residues Ser-188, Cys-221–Gly-224, Asp-240, Asp-260, and Asp-277. The active-site Proton acceptor is the Lys-306.

This sequence belongs to the class I-like SAM-binding methyltransferase superfamily. RNA methyltransferase RlmE family. RlmM subfamily. As to quaternary structure, monomer.

It localises to the cytoplasm. It carries out the reaction cytidine(2498) in 23S rRNA + S-adenosyl-L-methionine = 2'-O-methylcytidine(2498) in 23S rRNA + S-adenosyl-L-homocysteine + H(+). Catalyzes the 2'-O-methylation at nucleotide C2498 in 23S rRNA. In Klebsiella pneumoniae subsp. pneumoniae (strain ATCC 700721 / MGH 78578), this protein is Ribosomal RNA large subunit methyltransferase M.